A 116-amino-acid polypeptide reads, in one-letter code: Nucleoid-associated protein P9301_00191 (116 aa).

The protein belongs to the YbaB/EbfC family. In terms of assembly, homodimer.

The protein resides in the cytoplasm. It localises to the nucleoid. Its function is as follows. Binds to DNA and alters its conformation. May be involved in regulation of gene expression, nucleoid organization and DNA protection. The protein is Nucleoid-associated protein P9301_00191 of Prochlorococcus marinus (strain MIT 9301).